The following is a 294-amino-acid chain: Survival motor neuron protein (294 aa).

A compositionally biased stretch (gly residues) spans 1–10 (MAMSSGGSGS). Residues 1–32 (MAMSSGGSGSGVPEQEDAVLFRRGTGQSDDSD) form a disordered region. Position 2 is an N-acetylalanine (Ala-2). Ser-4, Ser-5, and Ser-8 each carry phosphoserine; by PKA. The segment at 13 to 44 (PEQEDAVLFRRGTGQSDDSDIWDDTALIKAYD) is P1 (binding site for GEMIN2). Thr-25 is subject to Phosphothreonine. A phosphoserine mark is found at Ser-28 and Ser-31. Residue Lys-51 forms a Glycyl lysine isopeptide (Lys-Gly) (interchain with G-Cter in SUMO2) linkage. The interval 60 to 88 (CETSGKSKTTPKRKPAKKNKSQKKNTAAS) is disordered. Over residues 68-82 (TTPKRKPAKKNKSQK) the composition is skewed to basic residues. Thr-69 bears the Phosphothreonine mark. Thr-85 carries the phosphothreonine; by PKA modification. In terms of domain architecture, Tudor spans 91–151 (QWKVGDKCSA…LSPICEVANN (61 aa)). The tract at residues 97–209 (KCSAIWSEDG…MPGPRLGPGK (113 aa)) is required for interaction with RPP20/POP7. The segment covering 156–166 (AQENENESQVS) has biased composition (low complexity). The tract at residues 156 to 222 (AQENENESQV…KFNGPPPPPP (67 aa)) is disordered. The residue at position 187 (Ser-187) is a Phosphoserine; by PKA. The segment covering 194–204 (LPPPPPMPGPR) has biased composition (pro residues). The span at 206–215 (GPGKPGLKFN) shows a compositional bias: low complexity. A Glycyl lysine isopeptide (Lys-Gly) (interchain with G-Cter in SUMO2) cross-link involves residue Lys-209. The P2 (binding site for SM B) stretch occupies residues 240–267 (PPIIPPPPPICPDSLDDADALGSMLISW). Positions 279–294 (GFRQNQKEGRCSHSLN) are required for interaction with SYNCRIP.

Belongs to the SMN family. Homooligomer; may form higher order homooligomers in the dimer to octamer range. Part of the core SMN complex that contains SMN1, GEMIN2/SIP1, DDX20/GEMIN3, GEMIN4, GEMIN5, GEMIN6, GEMIN7, GEMIN8 and STRAP/UNRIP. Part of the SMN-Sm complex that contains SMN1, GEMIN2/SIP1, DDX20/GEMIN3, GEMIN4, GEMIN5, GEMIN6, GEMIN7, GEMIN8, STRAP/UNRIP and the Sm proteins SNRPB, SNRPD1, SNRPD2, SNRPD3, SNRPE, SNRPF and SNRPG. Component of an import snRNP complex composed of KPNB1, RNUT1, SMN1 and ZNF259. Interacts with DDX20, FBL, NOLA1, RNUT1, SYNCRIP and with several spliceosomal snRNP core Sm proteins, including SNRPB, SNRPD1, SNRPD2, SNRPD3, SNRPE and ILF3. Interacts with GEMIN2; the interaction is direct. Interacts with GEMIN3; the interaction is direct. Interacts with GEMIN8; the interaction is direct. Interacts with SNRPB; the interaction is direct. Interacts (via Tudor domain) with SNRPD1 (via C-terminus); the interaction is direct. Interacts with SNRPD2; the interaction is direct. Interacts (via Tudor domain) with SNRPD3 (via C-terminus); the interaction is direct. Interacts with SNRPE; the interaction is direct. Interacts with OSTF1, LSM10, LSM11 and RPP20/POP7. Interacts (via C-terminal region) with ZPR1 (via C-terminal region). Interacts (via Tudor domain) with COIL. Interacts with SETX; recruits SETX to POLR2A. Interacts with POLR2A (via the C-terminal domain (CTD)). Interacts with PRMT5. Interacts with XRN2. Interacts (via C-terminus) with FMR1 (via C-terminus); the interaction is direct and occurs in a RNA-independent manner. Interacts (via Tudor domain) with SF3B2 ('Arg-508'-methylated form). Interacts with WRAP53/TCAB1. Interacts (via Tudor domain) with ELAVL4 in an RNA-independent manner; the interaction is required for localization of ELAVL4 to RNA granules. Interacts with FRG1.

Its subcellular location is the nucleus. The protein resides in the gem. The protein localises to the cajal body. It is found in the cytoplasm. It localises to the cytoplasmic granule. Its subcellular location is the perikaryon. The protein resides in the cell projection. The protein localises to the neuron projection. It is found in the axon. It localises to the myofibril. Its subcellular location is the sarcomere. The protein resides in the z line. Its function is as follows. The SMN complex catalyzes the assembly of small nuclear ribonucleoproteins (snRNPs), the building blocks of the spliceosome, and thereby plays an important role in the splicing of cellular pre-mRNAs. Most spliceosomal snRNPs contain a common set of Sm proteins SNRPB, SNRPD1, SNRPD2, SNRPD3, SNRPE, SNRPF and SNRPG that assemble in a heptameric protein ring on the Sm site of the small nuclear RNA to form the core snRNP (Sm core). In the cytosol, the Sm proteins SNRPD1, SNRPD2, SNRPE, SNRPF and SNRPG are trapped in an inactive 6S pICln-Sm complex by the chaperone CLNS1A that controls the assembly of the core snRNP. To assemble core snRNPs, the SMN complex accepts the trapped 5Sm proteins from CLNS1A forming an intermediate. Binding of snRNA inside 5Sm ultimately triggers eviction of the SMN complex, thereby allowing binding of SNRPD3 and SNRPB to complete assembly of the core snRNP. Within the SMN complex, SMN1 acts as a structural backbone and together with GEMIN2 it gathers the Sm complex subunits. Ensures the correct splicing of U12 intron-containing genes that may be important for normal motor and proprioceptive neurons development. Also required for resolving RNA-DNA hybrids created by RNA polymerase II, that form R-loop in transcription terminal regions, an important step in proper transcription termination. May also play a role in the metabolism of small nucleolar ribonucleoprotein (snoRNPs). The polypeptide is Survival motor neuron protein (SMN1) (Pongo abelii (Sumatran orangutan)).